A 393-amino-acid polypeptide reads, in one-letter code: Nucleosome assembly protein 1-like 1-B (393 aa).

Residues 1–10 show a composition bias toward basic and acidic residues; that stretch reads MANIDNKEQT. The segment at 1-38 is disordered; it reads MANIDNKEQTELDQQDMEDVEDVEEEETGEEANSKARQ. The segment covering 11–30 has biased composition (acidic residues); sequence ELDQQDMEDVEDVEEEETGE. The NAP1L motif signature appears at 126-151; that stretch reads YEPTEEECEWKVDEEEDIAEDLKEKA. Residues 274–280 carry the Nuclear localization signal motif; it reads IKKKQKH. The span at 347-377 shows a compositional bias: acidic residues; that stretch reads AIEDDDDDYDEEGEEADDEEGEEEADEDHDP. The disordered stretch occupies residues 347–393; that stretch reads AIEDDDDDYDEEGEEADDEEGEEEADEDHDPDFDPKKAQNPAECKQQ.

It belongs to the nucleosome assembly protein (NAP) family. As to quaternary structure, forms homomultimers. Interacts with histone b4. Interacts with the B-type cyclins ccnb1 and ccnb2. Post-translationally, phosphorylated by cyclin B-cdc2 kinase complexes.

The protein resides in the cytoplasm. Its subcellular location is the nucleus. In terms of biological role, acts as a chaperone for the linker histone to facilitate deposition of histone B4 onto linker DNA. Required for both remodeling of sperm chromatin into nucleosomes, and linker histone binding to nucleosome core dimers. Plays a role in tissue-specific gene regulation. Required for primitive hemopoiesis, acting upstream of tal1/scl. The protein is Nucleosome assembly protein 1-like 1-B (nap1l1-b) of Xenopus laevis (African clawed frog).